Consider the following 150-residue polypeptide: DNA-directed RNA polymerases I, II, and III subunit RPABC3 (150 aa).

At Ala2 the chain carries N-acetylalanine.

Belongs to the eukaryotic RPB8 RNA polymerase subunit family. In terms of assembly, component of the RNA polymerase I (Pol I), RNA polymerase II (Pol II) and RNA polymerase III (Pol III) complexes consisting of at least 13, 12 and 17 subunits, respectively. Pol I complex consists of a ten-subunit catalytic core composed of POLR1A/RPA1, POLR1B/RPA2, POLR1C/RPAC1, POLR1D/RPAC2, POLR1H/RPA12, POLR2E/RPABC1, POLR2F/RPABC2, POLR2H/RPABC3, POLR2K/RPABC4 and POLR2L/RPABC5; a mobile stalk subunit POLR1F/RPA43 protruding from the core and additional subunits homologous to general transcription factors POLR1E/RPA49 and POLR1G/RPA34. Part of Pol I pre-initiation complex (PIC), in which Pol I core assembles with RRN3 and promoter-bound UTBF and SL1/TIF-IB complex. Pol II complex contains a ten-subunit catalytic core composed of POLR2A/RPB1, POLR2B/RPB2, POLR2C/RPB3, POLR2I/RPB9, POLR2J/RPB11, POLR2E/RPABC1, POLR2F/RPABC2, POLR2H/RPABC3, POLR2K/RPABC4 and POLR2L/RPABC5 and a mobile stalk composed of two subunits POLR2D/RPB4 and POLR2G/RPB7. Part of Pol II(G) complex, in which Pol II core associates with an additional subunit POLR2M; unlike conventional Pol II, Pol II(G) functions as a transcriptional repressor. Part of Pol II pre-initiation complex (PIC), in which Pol II core assembles with Mediator, general transcription factors and other specific initiation factors including GTF2E1, GTF2E2, GTF2F1, GTF2F2, TCEA1, ERCC2, ERCC3, GTF2H2, GTF2H3, GTF2H4, GTF2H5, GTF2A1, GTF2A2, GTF2B and TBP; this large multi-subunit PIC complex mediates DNA unwinding and targets Pol II core to the transcription start site where the first phosphodiester bond forms. Directly interacts with POLR2A. Pol III complex consists of a ten-subunit catalytic core composed of POLR3A/RPC1, POLR3B/RPC2, POLR1C/RPAC1, POLR1D/RPAC2, POLR3K/RPC10, POLR2E/RPABC1, POLR2F/RPABC2, POLR2H/RPABC3, POLR2K/RPABC4 and POLR2L/RPABC5; a mobile stalk composed of two subunits POLR3H/RPC8 and CRCP/RPC9, protruding from the core and functioning primarily in transcription initiation; and additional subunits homologous to general transcription factors of the RNA polymerase II machinery, POLR3C/RPC3-POLR3F/RPC6-POLR3G/RPC7 heterotrimer required for transcription initiation and POLR3D/RPC4-POLR3E/RPC5 heterodimer involved in both transcription initiation and termination.

The protein localises to the nucleus. It localises to the nucleolus. DNA-dependent RNA polymerase catalyzes the transcription of DNA into RNA using the four ribonucleoside triphosphates as substrates. Common component of RNA polymerases I, II and III which synthesize ribosomal RNA precursors, mRNA precursors and many functional non-coding RNAs, and small RNAs, such as 5S rRNA and tRNAs, respectively. This is DNA-directed RNA polymerases I, II, and III subunit RPABC3 (POLR2H) from Bos taurus (Bovine).